Consider the following 498-residue polypeptide: Pup deamidase/depupylase (498 aa).

Residue 6 to 10 (GTEVE) participates in ATP binding. The Mg(2+) site is built by glutamate 8 and tyrosine 93. Catalysis depends on aspartate 95, which acts as the Proton acceptor. Glutamate 100 provides a ligand contact to Mg(2+). 102-103 (SA) is a binding site for ATP. Histidine 156 provides a ligand contact to Mg(2+). The ATP site is built by asparagine 158 and arginine 240. Histidine 242 contacts Mg(2+).

It belongs to the Pup ligase/Pup deamidase family. Pup deamidase subfamily. The cofactor is ATP.

The enzyme catalyses [prokaryotic ubiquitin-like protein]-C-terminal-L-glutamine + H2O = [prokaryotic ubiquitin-like protein]-C-terminal-L-glutamate + NH4(+). It participates in protein degradation; proteasomal Pup-dependent pathway. Its function is as follows. Specifically catalyzes the deamidation of the C-terminal glutamine of the prokaryotic ubiquitin-like protein Pup to glutamate, thereby rendering Pup competent for conjugation. Probably also displays depupylase (DPUP) activity, removing conjugated Pup from target proteins; thus may be involved in the recycling of Pup and may function similarly to deubiquitinases (DUBs) in eukaryotes to prevent or promote proteasomal degradation of certain proteins. The sequence is that of Pup deamidase/depupylase (dop) from Mycolicibacterium smegmatis (strain ATCC 700084 / mc(2)155) (Mycobacterium smegmatis).